The following is a 148-amino-acid chain: Snaclec 2 (148 aa).

A signal peptide spans Met1–Ala23. 3 disulfides stabilise this stretch: Cys27/Cys38, Cys55/Cys144, and Cys121/Cys136. A C-type lectin domain is found at Tyr34–Lys145.

It belongs to the snaclec family. In terms of assembly, heterodimer; disulfide-linked. Expressed by the venom gland.

It localises to the secreted. In terms of biological role, interferes with one step of hemostasis (modulation of platelet aggregation, or coagulation cascade, for example). The polypeptide is Snaclec 2 (Echis ocellatus (Ocellated saw-scaled viper)).